We begin with the raw amino-acid sequence, 154 residues long: Ascorbate-specific PTS system EIIA component (154 aa).

Residues 6–150 (SLAENNSIRL…QEVLDLIDRT (145 aa)) enclose the PTS EIIA type-2 domain. His-68 functions as the Tele-phosphohistidine intermediate in the catalytic mechanism. Residue His-68 is modified to Phosphohistidine.

Its subcellular location is the cytoplasm. The phosphoenolpyruvate-dependent sugar phosphotransferase system (sugar PTS), a major carbohydrate active transport system, catalyzes the phosphorylation of incoming sugar substrates concomitantly with their translocation across the cell membrane. The enzyme II UlaABC PTS system is involved in ascorbate transport. This is Ascorbate-specific PTS system EIIA component (ulaC) from Salmonella paratyphi A (strain ATCC 9150 / SARB42).